The chain runs to 409 residues: NADH-quinone oxidoreductase subunit D (409 aa).

Belongs to the complex I 49 kDa subunit family. In terms of assembly, NDH-1 is composed of 14 different subunits. Subunits NuoB, C, D, E, F, and G constitute the peripheral sector of the complex.

The protein localises to the cell inner membrane. It carries out the reaction a quinone + NADH + 5 H(+)(in) = a quinol + NAD(+) + 4 H(+)(out). NDH-1 shuttles electrons from NADH, via FMN and iron-sulfur (Fe-S) centers, to quinones in the respiratory chain. The immediate electron acceptor for the enzyme in this species is believed to be ubiquinone. Couples the redox reaction to proton translocation (for every two electrons transferred, four hydrogen ions are translocated across the cytoplasmic membrane), and thus conserves the redox energy in a proton gradient. The protein is NADH-quinone oxidoreductase subunit D of Helicobacter pylori (strain Shi470).